A 527-amino-acid polypeptide reads, in one-letter code: Rhamnogalacturonate lyase A (527 aa).

A signal peptide spans M1–A19. 2 disulfide bridges follow: C49-C92 and C183-C192. An N-linked (GlcNAc...) asparagine glycan is attached at N350.

It belongs to the polysaccharide lyase 4 family.

It is found in the secreted. It catalyses the reaction Endotype eliminative cleavage of L-alpha-rhamnopyranosyl-(1-&gt;4)-alpha-D-galactopyranosyluronic acid bonds of rhamnogalacturonan I domains in ramified hairy regions of pectin leaving L-rhamnopyranose at the reducing end and 4-deoxy-4,5-unsaturated D-galactopyranosyluronic acid at the non-reducing end.. Pectinolytic enzyme that has a positive effect in the apple hot-mash liquefaction process. This endolyase hydrolyzes the alpha-L-rhamnopyranosyl-(1,4)-alpha-D-galacturonopyranosyl glycosidic linkage by beta-elimination, thereby generating oligosaccharides terminating at the non-reducing end with a hex-4-enopyranosyluronic acid residue. This Aspergillus aculeatus protein is Rhamnogalacturonate lyase A (rglA).